The sequence spans 191 residues: UPF0312 protein Sputw3181_1309 (191 aa).

Positions 1–22 (MKKQLLSALIGVSLLVPMAASA) are cleaved as a signal peptide.

The protein belongs to the UPF0312 family. Type 1 subfamily.

It localises to the periplasm. The protein is UPF0312 protein Sputw3181_1309 of Shewanella sp. (strain W3-18-1).